The sequence spans 166 residues: Transcriptional repressor NrdR (166 aa).

Residues Cys-3–Cys-34 fold into a zinc finger. Positions Leu-49–Ser-139 constitute an ATP-cone domain.

Belongs to the NrdR family. It depends on Zn(2+) as a cofactor.

Its function is as follows. Negatively regulates transcription of bacterial ribonucleotide reductase nrd genes and operons by binding to NrdR-boxes. This chain is Transcriptional repressor NrdR, found in Pelotomaculum thermopropionicum (strain DSM 13744 / JCM 10971 / SI).